Here is a 406-residue protein sequence, read N- to C-terminus: Acetylornithine aminotransferase (406 aa).

Residues glycine 108–alanine 109 and phenylalanine 141 contribute to the pyridoxal 5'-phosphate site. Arginine 144 is a N(2)-acetyl-L-ornithine binding site. A pyridoxal 5'-phosphate-binding site is contributed by aspartate 226–glutamine 229. An N6-(pyridoxal phosphate)lysine modification is found at lysine 255. A N(2)-acetyl-L-ornithine-binding site is contributed by threonine 283. Position 284 (threonine 284) interacts with pyridoxal 5'-phosphate.

This sequence belongs to the class-III pyridoxal-phosphate-dependent aminotransferase family. ArgD subfamily. Homodimer. Pyridoxal 5'-phosphate serves as cofactor.

The protein resides in the cytoplasm. It catalyses the reaction N(2)-acetyl-L-ornithine + 2-oxoglutarate = N-acetyl-L-glutamate 5-semialdehyde + L-glutamate. Its pathway is amino-acid biosynthesis; L-arginine biosynthesis; N(2)-acetyl-L-ornithine from L-glutamate: step 4/4. The chain is Acetylornithine aminotransferase from Pseudomonas putida (strain ATCC 47054 / DSM 6125 / CFBP 8728 / NCIMB 11950 / KT2440).